Here is a 534-residue protein sequence, read N- to C-terminus: Peptide chain release factor 3 (534 aa).

Residues 9–278 (ARRRTFAIIS…FFVEHAPSPQ (270 aa)) enclose the tr-type G domain. GTP is bound by residues 18-25 (SHPDAGKT), 86-90 (DTPGH), and 140-143 (NKLD).

Belongs to the TRAFAC class translation factor GTPase superfamily. Classic translation factor GTPase family. PrfC subfamily.

Its subcellular location is the cytoplasm. In terms of biological role, increases the formation of ribosomal termination complexes and stimulates activities of RF-1 and RF-2. It binds guanine nucleotides and has strong preference for UGA stop codons. It may interact directly with the ribosome. The stimulation of RF-1 and RF-2 is significantly reduced by GTP and GDP, but not by GMP. The protein is Peptide chain release factor 3 of Xylella fastidiosa (strain M23).